The following is a 1135-amino-acid chain: Envelopment polyprotein (1135 aa).

The first 35 residues, 1-35, serve as a signal peptide directing secretion; sequence MRILKLLELVVKVSLFTIALSSVLLAFLTFRATDA. The Lumenal portion of the chain corresponds to 36 to 314; that stretch reads KVEIIRGDHP…KYSKSIYKQT (279 aa). Residues 41–43 carry the Cell attachment site motif; the sequence is RGD. Residue Asn-116 is glycosylated (N-linked (GlcNAc...) asparagine; by host). A disulfide bridge links Cys-122 with Cys-156. Residues 177–195 form a non-covalent dimerization region; sequence LDNKRHFSVGTNFFIPESL. Asn-210 is a glycosylation site (N-linked (GlcNAc...) asparagine; by host). The cysteines at positions 224 and 285 are disulfide-linked. Residues 315 to 366 traverse the membrane as a helical segment; it reads ACINFSWIRLILIALLIYFPIRWLVNKTTKPLFLWYDLMGLITYPVLLLINC. Residues 367–484 are Cytoplasmic-facing; it reads LWKYFPFKCS…VPGCPFLVTS (118 aa). A signal for signal peptide peptidase region spans residues 437-484; that stretch reads LSLSLLKFVTEILIGLVILSQIPMSMAQTTQCLSGCFYVPGCPFLVTS. The Lumenal segment spans residues 485 to 1067; sequence KFEKCPEKDQ…YFGSFFDTIR (583 aa). Residues Asn-588, Asn-605, and Asn-980 are each glycosylated (N-linked (GlcNAc...) asparagine; by host). A helical transmembrane segment spans residues 1068–1088; it reads VVLLIAFIFLVIYFCSILTSI. The Cytoplasmic segment spans residues 1089–1135; sequence CKGYVKHKSYKSRSKIEDDDEPEIKAPMLMKDTMTRRRPPMDFSHLV.

Belongs to the tospovirus envelope glycoprotein family. As to quaternary structure, homodimer; disulfide-linked. Heterodimer with Glycoprotein C. Interacts with nucleoprotein. In terms of assembly, heterodimer with Glycoprotein N. Interacts with nucleoprotein. Post-translationally, specific enzymatic cleavages in vivo yield mature proteins including Glycoprotein N and Glycoprotein C. Glycosylated with O-linked glycans. Glycosylation is essential for proper subcellular location. In terms of processing, cleaved at acidic pH.

It localises to the virion membrane. Its subcellular location is the host Golgi apparatus membrane. The protein resides in the host endoplasmic reticulum membrane. In terms of biological role, forms the spikes present at the surface of the virion together with Glycoprotein C. They are able to attach the virion to a cell receptor and to promote fusion of membranes after endocytosis of the virion. Plays a role in virus binding and/or entry into the vector midgut. Its function is as follows. Forms the spikes present at the surface of the virion together with Glycoprotein N. They are able to attach the virion to a cell receptor and to promote fusion of membranes after endocytosis of the virion. Probable class II fusion protein. This chain is Envelopment polyprotein (GP), found in Frankliniella occidentalis (Western flower thrips).